The following is a 77-amino-acid chain: Early E3 9.0 kDa glycoprotein (77 aa).

N-linked (GlcNAc...) asparagine; by host glycosylation occurs at asparagine 7. Residues 27 to 47 (ITILIVIGILILSVILYFIFC) form a helical membrane-spanning segment.

Belongs to the adenoviridae E3A-1 family.

It localises to the host nucleus membrane. This Human adenovirus B serotype 3 (HAdV-3) protein is Early E3 9.0 kDa glycoprotein.